Reading from the N-terminus, the 501-residue chain is Aspartate--tRNA ligase, cytoplasmic (501 aa).

Thr52 is modified (phosphothreonine). Residue Lys74 is modified to N6-acetyllysine. Glu229 provides a ligand contact to L-aspartate. The residue at position 249 (Ser249) is a Phosphoserine. The segment at 251-254 is aspartate; sequence QLYK. Position 273 (Arg273) interacts with L-aspartate. ATP-binding positions include 273–275 and 281–283; these read RAE and RHL. Residue Lys374 is modified to N6-acetyllysine. The segment at 411–415 is binding site for the 3'-end of tRNA; that stretch reads KQSNS. Glu424 contributes to the ATP binding site. 2 residues coordinate L-aspartate: Ser427 and Arg431. 472–475 contacts ATP; sequence GLER. Thr500 is modified (phosphothreonine; by PKA).

This sequence belongs to the class-II aminoacyl-tRNA synthetase family. Type 2 subfamily. As to quaternary structure, homodimer. Part of a multisubunit complex that groups tRNA ligases for Arg (RARS1), Asp (DARS1), Gln (QARS1), Ile (IARS1), Leu (LARS1), Lys (KARS1), Met (MARS1) the bifunctional ligase for Glu and Pro (EPRS1) and the auxiliary subunits AIMP1/p43, AIMP2/p38 and EEF1E1/p18.

The protein localises to the cytoplasm. It carries out the reaction tRNA(Asp) + L-aspartate + ATP = L-aspartyl-tRNA(Asp) + AMP + diphosphate. Catalyzes the specific attachment of an amino acid to its cognate tRNA in a 2 step reaction: the amino acid (AA) is first activated by ATP to form AA-AMP and then transferred to the acceptor end of the tRNA. The chain is Aspartate--tRNA ligase, cytoplasmic (DARS1) from Pongo abelii (Sumatran orangutan).